The following is a 377-amino-acid chain: Succinyl-diaminopimelate desuccinylase (377 aa).

Histidine 67 is a Zn(2+) binding site. Aspartate 69 is a catalytic residue. Position 100 (aspartate 100) interacts with Zn(2+). The Proton acceptor role is filled by glutamate 134. Zn(2+) is bound by residues glutamate 135, glutamate 163, and histidine 349.

This sequence belongs to the peptidase M20A family. DapE subfamily. Homodimer. Zn(2+) serves as cofactor. Co(2+) is required as a cofactor.

The catalysed reaction is N-succinyl-(2S,6S)-2,6-diaminopimelate + H2O = (2S,6S)-2,6-diaminopimelate + succinate. The protein operates within amino-acid biosynthesis; L-lysine biosynthesis via DAP pathway; LL-2,6-diaminopimelate from (S)-tetrahydrodipicolinate (succinylase route): step 3/3. Its function is as follows. Catalyzes the hydrolysis of N-succinyl-L,L-diaminopimelic acid (SDAP), forming succinate and LL-2,6-diaminopimelate (DAP), an intermediate involved in the bacterial biosynthesis of lysine and meso-diaminopimelic acid, an essential component of bacterial cell walls. The chain is Succinyl-diaminopimelate desuccinylase from Haemophilus influenzae (strain 86-028NP).